Reading from the N-terminus, the 476-residue chain is Ribulose bisphosphate carboxylase large chain (476 aa).

Substrate is bound by residues N124 and T174. K176 acts as the Proton acceptor in catalysis. K178 contacts substrate. Residues K202, D204, and E205 each contribute to the Mg(2+) site. K202 carries the post-translational modification N6-carboxylysine. The Proton acceptor role is filled by H295. Substrate contacts are provided by R296, H328, and S380.

It belongs to the RuBisCO large chain family. Type I subfamily. In terms of assembly, heterohexadecamer of 8 large chains and 8 small chains; disulfide-linked. The disulfide link is formed within the large subunit homodimers. The cofactor is Mg(2+). The disulfide bond which can form in the large chain dimeric partners within the hexadecamer appears to be associated with oxidative stress and protein turnover.

It is found in the carboxysome. It carries out the reaction 2 (2R)-3-phosphoglycerate + 2 H(+) = D-ribulose 1,5-bisphosphate + CO2 + H2O. The enzyme catalyses D-ribulose 1,5-bisphosphate + O2 = 2-phosphoglycolate + (2R)-3-phosphoglycerate + 2 H(+). Its function is as follows. RuBisCO catalyzes two reactions: the carboxylation of D-ribulose 1,5-bisphosphate, the primary event in carbon dioxide fixation, as well as the oxidative fragmentation of the pentose substrate in the photorespiration process. Both reactions occur simultaneously and in competition at the same active site. The chain is Ribulose bisphosphate carboxylase large chain from Cyanothece sp. (strain PCC 7425 / ATCC 29141).